The sequence spans 434 residues: Tryptamine hydroxycinnamoyltransferase 2 (434 aa).

Active-site proton acceptor residues include His154 and Asp380.

The protein belongs to the plant acyltransferase family.

Its function is as follows. Hydroxycinnamoyl transferase that catalyzes the transfer of an acyl from p-coumaryol-CoA to tryptamine, to produce coumaroyl tryptamine. Serotonin and tyramine serve as acyl acceptors in vitro. Can use caffeoyl-CoA, and to a lesser extent feruloyl-CoA, as acyl donors. The chain is Tryptamine hydroxycinnamoyltransferase 2 from Oryza sativa subsp. japonica (Rice).